The chain runs to 2159 residues: ATP-binding cassette sub-family A member 7 (2159 aa).

The chain crosses the membrane as a helical span at residues 22-42 (PIQLLVELLWPLFLFFILVAV). Over 43-546 (RHSHPPLEHH…DVFLRVLSRS (504 aa)) the chain is Extracellular. The cysteines at positions 75 and 222 are disulfide-linked. N309 carries an N-linked (GlcNAc...) asparagine glycan. 6 helical membrane-spanning segments follow: residues 547–567 (LPLF…KAVV), 590–610 (LGWF…LVLV), 623–643 (VVIF…SFLL), 652–672 (LAAA…VLCV), 678–698 (LHLG…GFGC), and 732–752 (AFLL…EAVC). The ABC transporter 1 domain occupies 804 to 1035 (VSIRGLKKHF…LGCGYYLTLV (232 aa)). An ATP-binding site is contributed by 838-845 (GHNGAGKT). The helical transmembrane segment at 846 to 866 (TTLSILSGLFPPSSGSASILG) threads the bilayer. Disordered regions lie at residues 1042–1088 (VTHD…GAVP) and 1172–1192 (GGDS…PTGP). The segment covering 1044–1061 (HDAKGDSEDPRREKKSDG) has biased composition (basic and acidic residues). Positions 1062–1081 (NGRTSDTAFTRGTSDKSNQA) are enriched in polar residues. The helical transmembrane segment at 1246 to 1266 (VVLPALFVGLALFFSLIVPPF) threads the bilayer. Topologically, residues 1267–1551 (GQYPPLQLSP…TLIASSVDVL (285 aa)) are extracellular. A disulfide bridge links C1359 with C1373. 5 consecutive transmembrane segments (helical) span residues 1552 to 1572 (VSIC…LVLI), 1598 to 1618 (FLWD…IFLA), 1635 to 1655 (LLLL…SFFF), 1663 to 1683 (VVLT…TFVL), and 1743 to 1763 (IIGK…LITL). Residues 1807–2039 (LVLRDLTKVY…FGAGHTLTLR (233 aa)) form the ABC transporter 2 domain. Residue 1841-1848 (GVNGAGKT) coordinates ATP. The segment at 2118–2159 (QGEEEESSRQEAEEEEVSKPGRQHPKRVSRFLEDPSSVETMI) is disordered. Positions 2119 to 2133 (GEEEESSRQEAEEEE) are enriched in acidic residues.

The protein belongs to the ABC transporter superfamily. ABCA family. In terms of processing, N-glycosylated. As to expression, widely expressed with higher expression in brain, lung, adrenal gland, spleen and hematopoietic tissues (at protein level). In the brain, expressed in cortex, cerebellum, hippocampus, olfactory bulb, neurons, astrocytes and microglia (at protein level). Also expressed in adipocytes and macrophages (at protein level). Expressed in thymocytes (at protein level). Highly expressed in spleen and hematopoietic tissues. Expressed in brain, lung, macrophages, microglia, oligodendrocytes and neurons.

Its subcellular location is the cell membrane. The protein resides in the golgi apparatus membrane. It is found in the early endosome membrane. The protein localises to the cytoplasm. It localises to the cell projection. Its subcellular location is the ruffle membrane. The protein resides in the phagocytic cup. Its function is as follows. Probable ATP-binding cassette (ABC) transporter that plays a role in lipid homeostasis and macrophage-mediated phagocytosis. Binds APOA1 and may function in apolipoprotein-mediated phospholipid efflux from cells. May also mediate cholesterol efflux. May regulate cellular ceramide homeostasis during keratinocyte differentiation. Involved in lipid raft organization and CD1D localization on thymocytes and antigen-presenting cells, which plays an important role in natural killer T-cell development and activation. Plays a role in phagocytosis of apoptotic cells by macrophages. Macrophage phagocytosis is stimulated by APOA1 or APOA2, probably by stabilization of ABCA7. Also involved in phagocytic clearance of amyloid-beta by microglia cells and macrophages. Further limits amyloid-beta production by playing a role in the regulation of amyloid-beta A4 precursor protein (APP) endocytosis and/or processing. The protein is ATP-binding cassette sub-family A member 7 (Abca7) of Mus musculus (Mouse).